The chain runs to 563 residues: Tripeptidyl-peptidase 1 (563 aa).

The signal sequence occupies residues 1–19 (MGLQACLLGLFALILSGKC). The propeptide at 20–195 (SYSPEPDQRR…PEPQVTGTVG (176 aa)) is removed in mature form. Cys-111 and Cys-122 are joined by a disulfide. The region spanning 199–563 (GVTPSVIRKR…PALLKTLLNP (365 aa)) is the Peptidase S53 domain. Asn-210 and Asn-222 each carry an N-linked (GlcNAc...) asparagine glycan. Residues Glu-272 and Asp-276 each act as charge relay system in the active site. N-linked (GlcNAc...) asparagine glycosylation is found at Asn-286, Asn-313, and Asn-443. 2 disulfides stabilise this stretch: Cys-365–Cys-526 and Cys-522–Cys-537. Ser-475 serves as the catalytic Charge relay system. 2 residues coordinate Ca(2+): Asp-517 and Val-518. Positions 539, 541, and 543 each coordinate Ca(2+).

In terms of assembly, monomer. Interacts with CLN5. Interacts with CLN3. Requires Ca(2+) as cofactor. In terms of processing, activated by autocatalytic proteolytical processing upon acidification. N-glycosylation is required for processing and activity.

It is found in the lysosome. The protein localises to the melanosome. It carries out the reaction Release of an N-terminal tripeptide from a polypeptide, but also has endopeptidase activity.. Its function is as follows. Lysosomal serine protease with tripeptidyl-peptidase I activity. May act as a non-specific lysosomal peptidase which generates tripeptides from the breakdown products produced by lysosomal proteinases. Requires substrates with an unsubstituted N-terminus. In Macaca fascicularis (Crab-eating macaque), this protein is Tripeptidyl-peptidase 1 (TPP1).